A 196-amino-acid chain; its full sequence is uncharacterized protein (196 aa).

This sequence belongs to the CDP-alcohol phosphatidyltransferase class-I family.

This is an uncharacterized protein from Aquifex aeolicus (strain VF5).